A 2016-amino-acid chain; its full sequence is Sodium channel protein type 5 subunit alpha (2016 aa).

At 1-129 the chain is on the cytoplasmic side; it reads MANFLLPRGT…IRRAAVKILV (129 aa). The tract at residues 28 to 56 is disordered; that stretch reads MAEKQARGSTTLQESREGLPEEEAPRPQL. At Ser-36 the chain carries Phosphoserine. Position 38 is a phosphothreonine (Thr-38). Residues 41 to 52 show a composition bias toward basic and acidic residues; the sequence is ESREGLPEEEAP. Residues 113-420 form an I repeat; that stretch reads VLSPFHPIRR…VVAMAYEEQN (308 aa). The helical transmembrane segment at 130 to 149 threads the bilayer; it reads HSLFNMLIMCTILTNCVFMA. Over 150-157 the chain is Extracellular; the sequence is QHDPPPWT. A helical transmembrane segment spans residues 158–179; the sequence is KYVEYTFTAIYTFESLVKILAR. The Cytoplasmic segment spans residues 180-188; that stretch reads GFCLHAFTF. The helical transmembrane segment at 189–209 threads the bilayer; that stretch reads LRDPWNWLDFSVIIMAYTTEF. Residues 210-216 are Extracellular-facing; the sequence is VDLGNVS. Asn-214 carries an N-linked (GlcNAc...) asparagine glycan. The helical transmembrane segment at 217 to 236 threads the bilayer; that stretch reads ALRTFRVLRALKTISVISGL. Residues 237 to 249 lie on the Cytoplasmic side of the membrane; sequence KTIVGALIQSVKK. The chain crosses the membrane as a helical span at residues 250 to 272; it reads LADVMVLTVFCLSVFALIGLQLF. Residues 273 to 357 lie on the Extracellular side of the membrane; that stretch reads MGNLRHKCVR…PDHGYTSFDS (85 aa). Cys-280 and Cys-335 are joined by a disulfide. N-linked (GlcNAc...) asparagine glycosylation is found at Asn-283, Asn-288, Asn-291, Asn-318, and Asn-328. The segment at residues 358 to 378 is an intramembrane region (pore-forming); that stretch reads FAWAFLALFRLMTQDCWERLY. The Extracellular portion of the chain corresponds to 379–386; sequence QQTLRSAG. A helical transmembrane segment spans residues 387–413; the sequence is KIYMIFFMLVIFLGSFYLVNLILAVVA. Over 414 to 719 the chain is Cytoplasmic; it reads MAYEEQNQAT…VKLVVMDPFT (306 aa). Residues Ser-457, Ser-460, Ser-483, and Ser-484 each carry the phosphoserine modification. Residues 461-591 form a disordered region; sequence LEMSPLAPVN…APGHALHGKK (131 aa). Thr-486 is subject to Phosphothreonine. Basic and acidic residues predominate over residues 491–503; that stretch reads EDRLPKSDSEDGP. Phosphoserine is present on residues Ser-497 and Ser-510. Positions 509–528 are enriched in polar residues; it reads LSLTRGLSRTSMKPRSSRGS. Dimethylated arginine; alternate occurs at positions 513 and 526. Omega-N-methylarginine; alternate is present on residues Arg-513 and Arg-526. Residues Ser-539, Ser-571, Ser-664, and Ser-667 each carry the phosphoserine modification. Over residues 570–580 the composition is skewed to polar residues; that stretch reads TSAQGQPSPGT. Dimethylated arginine; alternate is present on Arg-680. Residue Arg-680 is modified to Omega-N-methylarginine; alternate. The II repeat unit spans residues 699 to 969; the sequence is CCPLWMSIKQ…QLALARIQRG (271 aa). Residues 720 to 737 traverse the membrane as a helical segment; it reads DLTITMCIVLNTLFMALE. Topologically, residues 738–746 are extracellular; the sequence is HYNMTSEFE. N-linked (GlcNAc...) asparagine glycosylation is present at Asn-740. A helical membrane pass occupies residues 747–769; that stretch reads EMLQVGNLVFTGIFTAEMTFKII. Residues 770–775 lie on the Cytoplasmic side of the membrane; it reads ALDPYY. The chain crosses the membrane as a helical span at residues 776–796; the sequence is YFQQGWNIFDSIIVILSLMEL. Over 797-806 the chain is Extracellular; the sequence is GLSRMSNLSV. Asn-803 carries N-linked (GlcNAc...) asparagine glycosylation. The helical transmembrane segment at 807–821 threads the bilayer; that stretch reads LRSFRLLRVFKLAKS. Topologically, residues 822–838 are cytoplasmic; it reads WPTLNTLIKIIGNSVGA. Residues 839–860 traverse the membrane as a helical segment; sequence LGNLTLVLAIIVFIFAVVGMQL. Residues 861–884 are Extracellular-facing; the sequence is FGKNYSELRDSDSGLLPRWHMMDF. An N-linked (GlcNAc...) asparagine glycan is attached at Asn-864. An intramembrane region (pore-forming) is located at residues 885–903; it reads FHAFLIIFRILCGEWIETM. At 904–912 the chain is on the extracellular side; that stretch reads WDCMEVSGQ. Cys-906 and Cys-915 are disulfide-bonded. Residues 913 to 941 traverse the membrane as a helical segment; sequence SLCLLVFLLVMVIGNLVVLNLFLALLLSS. At 942–1203 the chain is on the cytoplasmic side; that stretch reads FSADNLTAPD…LRKTCYHIVE (262 aa). Residues 1005–1141 are disordered; it reads IATPYSPPPP…PEDSCSEGST (137 aa). Residues 1015–1030 show a composition bias toward basic and acidic residues; the sequence is ETEKVPPTRKETRFEE. Residues 1033 to 1044 show a composition bias toward low complexity; it reads QPGQGTPGDPEP. The span at 1054 to 1071 shows a compositional bias: acidic residues; that stretch reads SDTDDQEEDEENSLGTEE. Positions 1096–1113 are enriched in low complexity; sequence SQVSATASSEAEASASQA. The stretch at 1187 to 1501 is one III repeat; it reads PGKVWWRLRK…KKYYNAMKKL (315 aa). Residues 1204–1225 traverse the membrane as a helical segment; it reads HSWFETFIIFMILLSSGALAFE. The Extracellular segment spans residues 1226–1236; sequence DIYLEERKTIK. The chain crosses the membrane as a helical span at residues 1237–1259; it reads VLLEYADKMFTYVFVLEMLLKWV. At 1260 to 1268 the chain is on the cytoplasmic side; that stretch reads AYGFKKYFT. The helical transmembrane segment at 1269 to 1291 threads the bilayer; it reads NAWCWLDFLIVDVSLVSLVANTL. Residues 1292–1297 lie on the Extracellular side of the membrane; the sequence is GFAEMG. A helical transmembrane segment spans residues 1298–1317; sequence PIKSLRTLRALRPLRALSRF. The Cytoplasmic segment spans residues 1318-1330; the sequence is EGMRVVVNALVGA. A helical membrane pass occupies residues 1331 to 1355; that stretch reads IPSIMNVLLVCLIFWLIFSIMGVNL. The Extracellular portion of the chain corresponds to 1356–1400; sequence FAGKFGRCINQTEGDLPLNYTIVNNKSQCESLNLTGELYWTKVKV. Residues Asn-1365, Asn-1374, Asn-1380, and Asn-1388 are each glycosylated (N-linked (GlcNAc...) asparagine). Residues 1401–1422 constitute an intramembrane region (pore-forming); that stretch reads NFDNVGAGYLALLQVATFKGWM. Over 1423–1445 the chain is Extracellular; the sequence is DIMYAAVDSRGYEEQPQWEYNLY. Residues 1446–1470 form a helical membrane-spanning segment; that stretch reads MYIYFVIFIIFGSFFTLNLFIGVII. The Cytoplasmic segment spans residues 1471–1528; sequence DNFNQQKKKLGGQDIFMTEEQKKYYNAMKKLGSKKPQKPIPRPLNKYQGFIFDIVTKQ. Residue Ser-1503 is modified to Phosphoserine; by PKC. The IV repeat unit spans residues 1510-1807; the sequence is IPRPLNKYQG…WEKFDPEATQ (298 aa). A helical membrane pass occupies residues 1529–1547; sequence AFDVTIMFLICLNMVTMMV. At 1548–1558 the chain is on the extracellular side; that stretch reads ETDDQSPEKIN. Residues 1559-1580 form a helical membrane-spanning segment; that stretch reads ILAKINLLFVAIFTGECIVKLA. Residues 1581 to 1589 lie on the Cytoplasmic side of the membrane; sequence ALRHYYFTN. The helical transmembrane segment at 1590–1612 threads the bilayer; that stretch reads SWNIFDFVVVILSIVGTVLSDII. Residues 1613–1619 lie on the Extracellular side of the membrane; that stretch reads QKYFFSP. Residues 1620-1640 form a helical membrane-spanning segment; that stretch reads TLFRVIRLARIGRILRLIRGA. Residues 1641-1650 are Cytoplasmic-facing; the sequence is KGIRTLLFAL. The helical transmembrane segment at 1651 to 1679 threads the bilayer; that stretch reads MMSLPALFNIGLLLFLVMFIYSIFGMANF. The Extracellular segment spans residues 1680–1697; the sequence is AYVKWEAGIDDMFNFQTF. The segment at residues 1698 to 1714 is an intramembrane region (pore-forming); that stretch reads ANSMLCLFQITTSAGWD. The Extracellular segment spans residues 1715–1745; it reads GLLSPILNTGPPYCDPTLPNSNGSRGDCGSP. Asn-1736 is a glycosylation site (N-linked (GlcNAc...) asparagine). A helical transmembrane segment spans residues 1746–1771; sequence AVGILFFTTYIIISFLIVVNMYIAII. The Cytoplasmic portion of the chain corresponds to 1772–2016; the sequence is LENFSVATEE…SPDRDRESIV (245 aa). The tract at residues 1839–1901 is interaction with FGF13; it reads DLPMVSGDRI…ITTTLRRKHE (63 aa). The IQ domain occupies 1901–1930; the sequence is EEVSAMVIQRAFRRHLLQRSLKHASFLFRQ. A compositionally biased stretch (low complexity) spans 1959–1979; that stretch reads PLGPPSSSSISSTSFPPSYDS. The disordered stretch occupies residues 1959–2016; it reads PLGPPSSSSISSTSFPPSYDSVTRATSDNLQVRGSDYSHSEDLADFPPSPDRDRESIV. The interaction with NEDD4, NEDD4L and WWP2 stretch occupies residues 1974 to 1977; sequence PPSY. Residues 1981 to 1990 are compositionally biased toward polar residues; it reads TRATSDNLQV.

Belongs to the sodium channel (TC 1.A.1.10) family. Nav1.5/SCN5A subfamily. Cannot form the same regulatory interactions with beta subunits as other Navs do. Interacts with the PDZ domain of the syntrophin SNTA1, SNTB1 and SNTB2. Interacts with NEDD4, NEDD4L, WWP2 and GPD1L. Interacts with CALM. Interacts with FGF13; the interaction is direct and FGF13 may regulate SNC5A density at membranes and function. May also interact with FGF12 and FGF14. Interacts with TMEM233. Interacts with the spider Jingzhaotoxin-I (AC P83974, AC B1P1B7, AC B1P1B8). Interacts with ANK3. Interacts with PKP2 (via N-terminus). Interacts with XIRP2; the interaction is required for normal action potential configuration in the heart. Post-translationally, ubiquitinated by NEDD4L; which promotes its endocytosis. Does not seem to be ubiquitinated by NEDD4 or WWP2. Phosphorylation at Ser-1503 by PKC in a highly conserved cytoplasmic loop slows inactivation of the sodium channel and reduces peak sodium currents. Regulated through phosphorylation by CaMK2D. In terms of processing, lacks the cysteine which covalently binds the conotoxin GVIIJ. This cysteine (position 868) is speculated in other sodium channel subunits alpha to be implied in covalent binding with the sodium channel subunit beta-2 or beta-4. Post-translationally, N-glycosylated at Asn-318, probably hinders potential interaction with regulatory subunits. In terms of tissue distribution, found in jejunal circular smooth muscle cells (at protein level). Expressed in human atrial and ventricular cardiac muscle but not in adult skeletal muscle, brain, myometrium, liver, or spleen. Isoform 4 is expressed in brain.

Its subcellular location is the cell membrane. It localises to the cytoplasm. The protein localises to the perinuclear region. The protein resides in the sarcolemma. It is found in the T-tubule. Its subcellular location is the cell junction. The enzyme catalyses Na(+)(in) = Na(+)(out). With respect to regulation, channel inactivation is regulated by intracellular calcium levels. It is a tetrodotoxin-resistant voltage-gated Na(+) channel (Nav). Functionally, pore-forming subunit of Nav1.5, a voltage-gated sodium (Nav) channel that directly mediates the depolarizing phase of action potentials in excitable membranes. Navs, also called VGSCs (voltage-gated sodium channels) or VDSCs (voltage-dependent sodium channels), operate by switching between closed and open conformations depending on the voltage difference across the membrane. In the open conformation they allow Na(+) ions to selectively pass through the pore, along their electrochemical gradient. The influx of Na(+) ions provokes membrane depolarization, initiating the propagation of electrical signals throughout cells and tissues. Nav1.5 is the predominant sodium channel expressed in myocardial cells and it is responsible for the initial upstroke of the action potential in cardiac myocytes, thereby initiating the heartbeat. Required for normal electrical conduction including formation of the infranodal ventricular conduction system and normal action potential configuration, as a result of its interaction with XIRP2. The chain is Sodium channel protein type 5 subunit alpha from Homo sapiens (Human).